The chain runs to 107 residues: UPF0122 protein MYPE4850 (107 aa).

Belongs to the UPF0122 family.

In terms of biological role, might take part in the signal recognition particle (SRP) pathway. This is inferred from the conservation of its genetic proximity to ftsY/ffh. May be a regulatory protein. This chain is UPF0122 protein MYPE4850, found in Malacoplasma penetrans (strain HF-2) (Mycoplasma penetrans).